The chain runs to 506 residues: Lysine--tRNA ligase (506 aa).

Residues E415 and E422 each contribute to the Mg(2+) site.

This sequence belongs to the class-II aminoacyl-tRNA synthetase family. As to quaternary structure, homodimer. The cofactor is Mg(2+).

The protein resides in the cytoplasm. The catalysed reaction is tRNA(Lys) + L-lysine + ATP = L-lysyl-tRNA(Lys) + AMP + diphosphate. In Erwinia tasmaniensis (strain DSM 17950 / CFBP 7177 / CIP 109463 / NCPPB 4357 / Et1/99), this protein is Lysine--tRNA ligase.